Consider the following 348-residue polypeptide: Autophagy-related protein 27 (348 aa).

An N-terminal signal peptide occupies residues 1-20 (MYRPDLLAFLLPLLAAPVFS). The Lumenal portion of the chain corresponds to 21-274 (AETLDCGKIR…DDGGDNSSSH (254 aa)). The region spanning 24–255 (LDCGKIRADG…TWHTKYACEK (232 aa)) is the MRH domain. 3 disulfide bridges follow: Cys-26/Cys-69, Cys-82/Cys-89, and Cys-175/Cys-253. N-linked (GlcNAc...) asparagine glycosylation is found at Asn-61 and Asn-84. A compositionally biased stretch (basic and acidic residues) spans 180-208 (EGTEGEWVSEEKYEKRADEKKDDDKKEDG). A disordered region spans residues 180–219 (EGTEGEWVSEEKYEKRADEKKDDDKKEDGGDKDEGESTLE). N-linked (GlcNAc...) asparagine glycans are attached at residues Asn-226 and Asn-270. The chain crosses the membrane as a helical span at residues 275-295 (WGFFTWFVLIAFLLIAGYLIF). Topologically, residues 296-348 (SSWINFTRYGARGWDLLPHSDTIRDIPYLLKDFIRRILNTVQGTGSRGGYSAV) are cytoplasmic.

It belongs to the ATG27 family. Forms a complex with ATG9 and ATG23.

It localises to the cytoplasmic vesicle membrane. The protein resides in the golgi apparatus membrane. Its subcellular location is the mitochondrion membrane. The protein localises to the preautophagosomal structure membrane. In terms of biological role, effector of VPS34 phosphatidylinositol 3-phosphate kinase signaling. Regulates the cytoplasm to vacuole transport (Cvt) vesicle formation. Plays a role in ATG protein retrieval from the pre-autophagosomal structure (PAS) and is especially required for autophagy-dependent cycling of ATG9. Autophagy is required for proper vegetative growth, asexual/sexual reproduction, and full virulence. Autophagy is particularly involved in the biosynthesis of deoxynivalenol (DON), an important virulence determinant. In Gibberella zeae (strain ATCC MYA-4620 / CBS 123657 / FGSC 9075 / NRRL 31084 / PH-1) (Wheat head blight fungus), this protein is Autophagy-related protein 27.